The sequence spans 99 residues: Putative protein tag-209 (99 aa).

The signal sequence occupies residues 1–16 (MLKLLAFVALLSVSVS).

This Caenorhabditis elegans protein is Putative protein tag-209 (tag-209).